We begin with the raw amino-acid sequence, 35 residues long: MSDIN-like toxin proprotein 6 (35 aa).

The propeptide occupies 1–10; sequence MSDINTTRLP. A cross-link (cyclopeptide (Phe-Pro)) is located at residues 11–18; the sequence is FVFVASPP. The propeptide occupies 19–35; it reads CVGDDIAMVLTRGENLC.

This sequence belongs to the MSDIN fungal toxin family. In terms of processing, processed by the macrocyclase-peptidase enzyme POPB to yield a toxic cyclic octapeptide. POPB first removes 10 residues from the N-terminus. Conformational trapping of the remaining peptide forces the enzyme to release this intermediate rather than proceed to macrocyclization. The enzyme rebinds the remaining peptide in a different conformation and catalyzes macrocyclization of the N-terminal 8 residues. As to expression, expressed in basidiocarps.

Functionally, probable toxin that belongs to the MSDIN-like toxin family responsible for a large number of food poisoning cases and deaths. This is MSDIN-like toxin proprotein 6 from Amanita exitialis (Guangzhou destroying angel).